Here is a 223-residue protein sequence, read N- to C-terminus: 7-cyano-7-deazaguanine synthase (223 aa).

ATP is bound at residue 11-21; that stretch reads ISGGMDSALAA. Zn(2+) is bound by residues Cys-189, Cys-197, Cys-200, and Cys-203.

It belongs to the QueC family. It depends on Zn(2+) as a cofactor.

The enzyme catalyses 7-carboxy-7-deazaguanine + NH4(+) + ATP = 7-cyano-7-deazaguanine + ADP + phosphate + H2O + H(+). It functions in the pathway purine metabolism; 7-cyano-7-deazaguanine biosynthesis. Its function is as follows. Catalyzes the ATP-dependent conversion of 7-carboxy-7-deazaguanine (CDG) to 7-cyano-7-deazaguanine (preQ(0)). This is 7-cyano-7-deazaguanine synthase from Campylobacter fetus subsp. fetus (strain 82-40).